Reading from the N-terminus, the 610-residue chain is Protein Smaug homolog 1 (610 aa).

Serine 67 is modified (phosphoserine). Disordered stretches follow at residues 177 to 222 (ARGP…EEGS), 318 to 366 (SSPS…LQPP), and 464 to 487 (NRGF…GRRN). The SAM domain occupies 222 to 295 (SGMKDVPAWL…LKSLERDIIE (74 aa)). At serine 319 the chain carries Phosphoserine. Position 323 is a phosphothreonine (threonine 323). The segment covering 344 to 358 (SAATVTSATASASAG) has biased composition (low complexity). Arginine 465 is modified (omega-N-methylarginine). A compositionally biased stretch (polar residues) spans 467–480 (FGQSNSLPTASSVG). A Phosphoserine modification is found at serine 472.

Belongs to the SMAUG family. Expressed in brain (at protein level).

Its subcellular location is the cytoplasm. The protein resides in the cell projection. It is found in the dendrite. It localises to the synapse. The protein localises to the synaptosome. Its function is as follows. Acts as a translational repressor of SRE-containing messengers. The sequence is that of Protein Smaug homolog 1 (Samd4a) from Rattus norvegicus (Rat).